A 141-amino-acid polypeptide reads, in one-letter code: Putative nickel-responsive regulator (141 aa).

Histidine 80, histidine 91, histidine 93, and cysteine 99 together coordinate Ni(2+).

It belongs to the transcriptional regulatory CopG/NikR family. Requires Ni(2+) as cofactor.

Functionally, transcriptional regulator. This chain is Putative nickel-responsive regulator, found in Methanococcus aeolicus (strain ATCC BAA-1280 / DSM 17508 / OCM 812 / Nankai-3).